Here is a 109-residue protein sequence, read N- to C-terminus: Spermidine export protein MdtI (109 aa).

The next 4 membrane-spanning stretches (helical) occupy residues 6–26 (WVHA…NVFL), 36–56 (FYGI…SQAV), 64–84 (AYAL…WVLF), and 88–108 (LNNK…MIKL).

The protein belongs to the drug/metabolite transporter (DMT) superfamily. Small multidrug resistance (SMR) (TC 2.A.7.1) family. MdtI subfamily. Forms a complex with MdtJ.

It is found in the cell inner membrane. In terms of biological role, catalyzes the excretion of spermidine. The protein is Spermidine export protein MdtI of Citrobacter koseri (strain ATCC BAA-895 / CDC 4225-83 / SGSC4696).